A 439-amino-acid chain; its full sequence is Probable cysteine protease atg4 (439 aa).

The tract at residues 65–91 (LSTTETTTPPDSTVGSLESSSEYDNCD) is disordered. Residues 66–77 (STTETTTPPDST) show a composition bias toward low complexity. Positions 78-91 (VGSLESSSEYDNCD) are enriched in polar residues. C158 acts as the Nucleophile in catalysis. Catalysis depends on residues D332 and H334.

Belongs to the peptidase C54 family.

The protein resides in the cytoplasm. It localises to the nucleus. It is found in the preautophagosomal structure. The enzyme catalyses [protein]-C-terminal L-amino acid-glycyl-phosphatidylethanolamide + H2O = [protein]-C-terminal L-amino acid-glycine + a 1,2-diacyl-sn-glycero-3-phosphoethanolamine. Functionally, cysteine protease that plays a key role in cytoplasm to vacuole transport (Cvt) and autophagy by mediating both proteolytic activation and delipidation of ATG8. Required for selective autophagic degradation of the nucleus (nucleophagy) as well as for mitophagy which contributes to regulate mitochondrial quantity and quality by eliminating the mitochondria to a basal level to fulfill cellular energy requirements and preventing excess ROS production. The protease activity is required for proteolytic activation of ATG8: cleaves the C-terminal amino acid of ATG8 to reveal a C-terminal glycine. ATG8 ubiquitin-like activity requires the exposure of the glycine at the C-terminus for its conjugation to phosphatidylethanolamine (PE) and its insertion to membranes, which is necessary for autophagy. The ATG8-PE conjugate mediates tethering between adjacent membranes and stimulates membrane hemifusion, leading to expansion of the autophagosomal membrane during autophagy. In addition to the protease activity, also catalyzes deconjugation of PE-conjugated forms of ATG8 during macroautophagy: ATG8 delipidation is required to release the protein from membranes, which facilitates multiple events during macroautophagy, and especially for efficient autophagosome biogenesis, the assembly of ATG9-containing tubulovesicular clusters into phagophores/autophagosomes, and for the disassembly of PAS-associated ATG components. ATG8 delipidation by ATG4 also recycles ATG8-PE generated on inappropriate membranes to maintain a reservoir of unlipidated ATG8 that is required for autophagosome formation at the PAS. The protein is Probable cysteine protease atg4 (atg4) of Sclerotinia sclerotiorum (strain ATCC 18683 / 1980 / Ss-1) (White mold).